The primary structure comprises 234 residues: Sugar fermentation stimulation protein homolog (234 aa).

The protein belongs to the SfsA family.

This chain is Sugar fermentation stimulation protein homolog, found in Shewanella piezotolerans (strain WP3 / JCM 13877).